Consider the following 149-residue polypeptide: Large ribosomal subunit protein bL9 (149 aa).

Belongs to the bacterial ribosomal protein bL9 family.

Binds to the 23S rRNA. The protein is Large ribosomal subunit protein bL9 of Enterobacter sp. (strain 638).